Here is a 623-residue protein sequence, read N- to C-terminus: Kelch repeat and BTB domain-containing protein 11 (623 aa).

A disordered region spans residues methionine 1–valine 129. Over residues proline 12–alanine 31 the composition is skewed to low complexity. Polar residues predominate over residues cysteine 42 to alanine 55. Phosphoserine occurs at positions 64, 67, 87, and 107. The segment covering glutamate 79–leucine 91 has biased composition (low complexity). The BTB domain occupies proline 140 to methionine 196. Kelch repeat units follow at residues arginine 311–asparagine 359, tyrosine 360–glycine 412, histidine 413–cysteine 455, and glutamate 458–glycine 500.

This chain is Kelch repeat and BTB domain-containing protein 11 (KBTBD11), found in Homo sapiens (Human).